The chain runs to 577 residues: Arginine--tRNA ligase (577 aa).

The 'HIGH' region motif lies at P122 to H132.

It belongs to the class-I aminoacyl-tRNA synthetase family. In terms of assembly, monomer.

It localises to the cytoplasm. It carries out the reaction tRNA(Arg) + L-arginine + ATP = L-arginyl-tRNA(Arg) + AMP + diphosphate. The chain is Arginine--tRNA ligase from Escherichia coli (strain ATCC 8739 / DSM 1576 / NBRC 3972 / NCIMB 8545 / WDCM 00012 / Crooks).